The chain runs to 3712 residues: Laminin subunit alpha (3712 aa).

Positions 1 to 22 (MGHGVASIGALLVILAISYCQA) are cleaved as a signal peptide. The Laminin N-terminal domain occupies 23–272 (ELTPPYFNLA…SIKDISIGGR (250 aa)). 2 N-linked (GlcNAc...) asparagine glycosylation sites follow: Asn116 and Asn219. 43 cysteine pairs are disulfide-bonded: Cys273–Cys282, Cys275–Cys296, Cys298–Cys307, Cys310–Cys330, Cys333–Cys342, Cys335–Cys367, Cys370–Cys379, Cys382–Cys400, Cys403–Cys414, Cys405–Cys421, Cys423–Cys432, Cys435–Cys445, Cys448–Cys460, Cys450–Cys468, Cys470–Cys479, Cys482–Cys492, Cys495–Cys507, Cys497–Cys514, Cys516–Cys525, Cys528–Cys538, Cys541–Cys553, Cys543–Cys560, Cys562–Cys571, Cys574–Cys584, Cys587–Cys599, Cys589–Cys605, Cys607–Cys616, Cys619–Cys629, Cys632–Cys644, Cys634–Cys650, Cys652–Cys661, Cys664–Cys674, Cys677–Cys691, Cys679–Cys700, Cys702–Cys711, Cys714–Cys729, Cys732–Cys746, Cys734–Cys753, Cys755–Cys764, Cys767–Cys782, Cys785–Cys797, Cys787–Cys804, and Cys806–Cys815. Laminin EGF-like domains are found at residues 273-332 (CMCN…NCEP), 333-402 (CNCH…VCSP), 403-447 (CQCD…NCRE), 448-494 (CECN…ECKA), 495-540 (CECN…TCSY), 541-586 (CDCD…DCKP), 587-631 (CNCS…DCLP), 632-676 (CHCD…SCED), 677-731 (CNCD…GCEI), and 732-784 (CDCW…GCKD). The N-linked (GlcNAc...) asparagine glycan is linked to Asn395. The N-linked (GlcNAc...) asparagine glycan is linked to Asn453. A glycan (N-linked (GlcNAc...) asparagine) is linked at Asn508. Asn588 carries an N-linked (GlcNAc...) asparagine glycan. A glycan (N-linked (GlcNAc...) asparagine) is linked at Asn722. In terms of domain architecture, Laminin EGF-like 11; truncated spans 785–815 (CSCDVGGSWQSVCDKISGQCKCHPRITGLAC). The segment at 816–1374 (TQPLTTHFFP…TADYNSGALP (559 aa)) is domain IV''. N-linked (GlcNAc...) asparagine glycans are attached at residues Asn897 and Asn1352. 16 cysteine pairs are disulfide-bonded: Cys1375-Cys1387, Cys1377-Cys1394, Cys1396-Cys1405, Cys1408-Cys1418, Cys1421-Cys1429, Cys1423-Cys1436, Cys1438-Cys1447, Cys1450-Cys1463, Cys1466-Cys1480, Cys1468-Cys1487, Cys1489-Cys1498, Cys1501-Cys1511, Cys1514-Cys1526, Cys1516-Cys1533, Cys1535-Cys1544, and Cys1547-Cys1562. Laminin EGF-like domains follow at residues 1375 to 1420 (CNCD…DCKP), 1421 to 1465 (CKCP…GCEE), 1466 to 1513 (CACN…HCEQ), and 1514 to 1564 (CSCH…GCTT). Asn1484 carries an N-linked (GlcNAc...) asparagine glycan. The Laminin EGF-like 16; first part domain maps to 1565-1574 (CFCFGKTSRC). N-linked (GlcNAc...) asparagine glycosylation is found at Asn1583 and Asn1617. The Laminin IV type A domain occupies 1585–1775 (SLLKHVSITT…GEYQFLAVER (191 aa)). The region spanning 1776-1808 (CSCPPGYSGHSCEDCAPGYYRDPSGPYGGYCIP) is the Laminin EGF-like 16; second part domain. Disulfide bonds link Cys1778–Cys1787, Cys1790–Cys1806, Cys1809–Cys1818, Cys1811–Cys1825, Cys1828–Cys1837, Cys1840–Cys1856, Cys1859–Cys1874, Cys1861–Cys1885, Cys1887–Cys1896, Cys1899–Cys1914, Cys1917–Cys1931, Cys1919–Cys1938, Cys1941–Cys1950, Cys1953–Cys1967, Cys1970–Cys1980, Cys1972–Cys1987, Cys1989–Cys1998, Cys2001–Cys2014, Cys2017–Cys2028, Cys2019–Cys2035, Cys2037–Cys2046, Cys2049–Cys2061, Cys2064–Cys2076, Cys2066–Cys2083, Cys2085–Cys2094, and Cys2097–Cys2109. 6 consecutive Laminin EGF-like domains span residues 1809–1858 (CECN…DCMI), 1859–1916 (CACP…VCKP), 1917–1969 (CECS…NCQS), 1970–2016 (CDCD…GCRA), 2017–2063 (CDCG…GCTP), and 2064–2111 (CNCN…GCQE). An N-linked (GlcNAc...) asparagine glycan is attached at Asn1847. A glycan (N-linked (GlcNAc...) asparagine) is linked at Asn1943. Residue Asn2024 is glycosylated (N-linked (GlcNAc...) asparagine). A domain II and I region spans residues 2112-2671 (CNNCHHALLD…EAARQLANSI (560 aa)). Residues 2178–2249 (KKANSELESD…LSKNLEAAAS (72 aa)) are a coiled coil. Asn2196, Asn2215, Asn2267, Asn2301, and Asn2323 each carry an N-linked (GlcNAc...) asparagine glycan. Residues 2301–2321 (NKSLNALKNDIGEFSDHLEDL) are a coiled coil. The stretch at 2376–2450 (DLTLNQINQK…QYTDMTASAE (75 aa)) forms a coiled coil. 9 N-linked (GlcNAc...) asparagine glycosylation sites follow: Asn2482, Asn2524, Asn2538, Asn2569, Asn2699, Asn2720, Asn2890, Asn2938, and Asn3010. The stretch at 2541–2676 (EHQLKDINKL…LANSIKVGVN (136 aa)) forms a coiled coil. 3 consecutive Laminin G-like domains span residues 2672–2868 (KVGV…ERDV), 2876–3048 (VTGL…EEGC), and 3055–3223 (VVSY…INGC). A disulfide bridge links Cys3022 with Cys3048. A glycan (N-linked (GlcNAc...) asparagine) is linked at Asn3070. A disulfide bridge connects residues Cys3196 and Cys3223. Residues 3244 to 3297 (NEVESPWSNADTLPPLKPDIESTLPPTTPTTTTTTTTTTTSTTTTSTTTTTTTP) form a disordered region. Positions 3265-3297 (STLPPTTPTTTTTTTTTTTSTTTTSTTTTTTTP) are enriched in low complexity. Laminin G-like domains lie at 3349–3528 (GYRF…VVPC) and 3534–3709 (RGLF…QGYC). Residue Asn3491 is glycosylated (N-linked (GlcNAc...) asparagine). The cysteines at positions 3505 and 3528 are disulfide-linked. Asn3612 carries an N-linked (GlcNAc...) asparagine glycan. A disulfide bridge connects residues Cys3682 and Cys3709.

In terms of assembly, laminin is a complex glycoprotein, consisting of three different polypeptide chains (alpha, beta, gamma), which are bound to each other by disulfide bonds into a cross-shaped molecule comprising one long and three short arms with globules at each end. As to expression, newly formed mesoderm and later prominently expressed in hemocytes, which also synthesize collagen IV. Expressed in muscles.

Its subcellular location is the secreted. The protein localises to the extracellular space. It localises to the extracellular matrix. It is found in the basement membrane. The protein resides in the synapse. Its subcellular location is the cell projection. The protein localises to the axon. It localises to the cytoplasmic vesicle. It is found in the secretory vesicle. The protein resides in the synaptic vesicle. Its function is as follows. Binding to cells via a high affinity receptor, laminin is thought to mediate the attachment, migration and organization of cells into tissues during embryonic development by interacting with other extracellular matrix components. Activates presynaptic signaling involving integrin alpha-PS3/beta-nu and Fak to suppress neuromuscular junction (NMJ) growth during larval development and during low crawling activity, but not during higher-crawling conditions. Mediates, together with integrin alpha-PS3/beta-nu, glutamate receptor-modulated NMJ growth. This Drosophila melanogaster (Fruit fly) protein is Laminin subunit alpha (LanA).